A 158-amino-acid chain; its full sequence is Transcription elongation factor GreA (158 aa).

This sequence belongs to the GreA/GreB family.

Its function is as follows. Necessary for efficient RNA polymerase transcription elongation past template-encoded arresting sites. The arresting sites in DNA have the property of trapping a certain fraction of elongating RNA polymerases that pass through, resulting in locked ternary complexes. Cleavage of the nascent transcript by cleavage factors such as GreA or GreB allows the resumption of elongation from the new 3'terminus. GreA releases sequences of 2 to 3 nucleotides. This chain is Transcription elongation factor GreA, found in Ralstonia nicotianae (strain ATCC BAA-1114 / GMI1000) (Ralstonia solanacearum).